The chain runs to 162 residues: NADH-quinone oxidoreductase subunit I (162 aa).

4Fe-4S ferredoxin-type domains follow at residues 53–83 and 93–122; these read LRRY…IEAE and TRYD…EGPN. Residues C63, C66, C69, C73, C102, C105, C108, and C112 each contribute to the [4Fe-4S] cluster site.

This sequence belongs to the complex I 23 kDa subunit family. In terms of assembly, NDH-1 is composed of 14 different subunits. Subunits NuoA, H, J, K, L, M, N constitute the membrane sector of the complex. It depends on [4Fe-4S] cluster as a cofactor.

It is found in the cell inner membrane. It carries out the reaction a quinone + NADH + 5 H(+)(in) = a quinol + NAD(+) + 4 H(+)(out). Its function is as follows. NDH-1 shuttles electrons from NADH, via FMN and iron-sulfur (Fe-S) centers, to quinones in the respiratory chain. The immediate electron acceptor for the enzyme in this species is believed to be ubiquinone. Couples the redox reaction to proton translocation (for every two electrons transferred, four hydrogen ions are translocated across the cytoplasmic membrane), and thus conserves the redox energy in a proton gradient. The sequence is that of NADH-quinone oxidoreductase subunit I from Rhodospirillum rubrum (strain ATCC 11170 / ATH 1.1.1 / DSM 467 / LMG 4362 / NCIMB 8255 / S1).